The primary structure comprises 291 residues: Small ribosomal subunit protein uS2 (291 aa).

The tract at residues 270–291 (NINEEANTEFEQALSDADEDKN) is disordered.

Belongs to the universal ribosomal protein uS2 family.

The chain is Small ribosomal subunit protein uS2 from Rickettsia bellii (strain OSU 85-389).